The following is a 48-amino-acid chain: uncharacterized protein (48 aa).

Residues 1–30 (MLGRTKLGNRNAQANNNAKKKNGFQTHFDS) form a disordered region.

This is an uncharacterized protein from Bacillus subtilis (strain 168).